The following is a 475-amino-acid chain: Ribulose bisphosphate carboxylase large chain (475 aa).

Residues 1–2 (MS) constitute a propeptide that is removed on maturation. Residue Pro-3 is modified to N-acetylproline. Lys-14 carries the post-translational modification N6,N6,N6-trimethyllysine. 2 residues coordinate substrate: Asn-123 and Thr-173. The active-site Proton acceptor is the Lys-175. Residue Lys-177 coordinates substrate. 3 residues coordinate Mg(2+): Lys-201, Asp-203, and Glu-204. Lys-201 carries the N6-carboxylysine modification. The Proton acceptor role is filled by His-294. Residues Arg-295, His-327, and Ser-379 each coordinate substrate.

It belongs to the RuBisCO large chain family. Type I subfamily. In terms of assembly, heterohexadecamer of 8 large chains and 8 small chains; disulfide-linked. The disulfide link is formed within the large subunit homodimers. The cofactor is Mg(2+). The disulfide bond which can form in the large chain dimeric partners within the hexadecamer appears to be associated with oxidative stress and protein turnover.

It localises to the plastid. Its subcellular location is the chloroplast. It carries out the reaction 2 (2R)-3-phosphoglycerate + 2 H(+) = D-ribulose 1,5-bisphosphate + CO2 + H2O. The catalysed reaction is D-ribulose 1,5-bisphosphate + O2 = 2-phosphoglycolate + (2R)-3-phosphoglycerate + 2 H(+). Its function is as follows. RuBisCO catalyzes two reactions: the carboxylation of D-ribulose 1,5-bisphosphate, the primary event in carbon dioxide fixation, as well as the oxidative fragmentation of the pentose substrate in the photorespiration process. Both reactions occur simultaneously and in competition at the same active site. In Pinus pinea (Italian stone pine), this protein is Ribulose bisphosphate carboxylase large chain.